A 96-amino-acid chain; its full sequence is Small ribosomal subunit protein uS19 (96 aa).

The protein belongs to the universal ribosomal protein uS19 family.

In terms of biological role, protein S19 forms a complex with S13 that binds strongly to the 16S ribosomal RNA. The polypeptide is Small ribosomal subunit protein uS19 (Koribacter versatilis (strain Ellin345)).